The chain runs to 323 residues: Small ribosomal subunit protein uS9m (323 aa).

The disordered stretch occupies residues 298–323; it reads TRDARKVERKKPGKVKARKSPTWVKR. Basic residues predominate over residues 304 to 323; it reads VERKKPGKVKARKSPTWVKR.

The protein belongs to the universal ribosomal protein uS9 family.

It localises to the mitochondrion. This is Small ribosomal subunit protein uS9m (MRPS9) from Debaryomyces hansenii (strain ATCC 36239 / CBS 767 / BCRC 21394 / JCM 1990 / NBRC 0083 / IGC 2968) (Yeast).